Reading from the N-terminus, the 481-residue chain is Phospho-2-dehydro-3-deoxyheptonate aldolase (481 aa).

The tract at residues 1–22 (MSQQTTPNAPGWAPDSWRSKPI) is disordered.

It belongs to the class-II DAHP synthase family. Homodimer. In terms of processing, the N-terminus is blocked.

The enzyme catalyses D-erythrose 4-phosphate + phosphoenolpyruvate + H2O = 7-phospho-2-dehydro-3-deoxy-D-arabino-heptonate + phosphate. Its pathway is metabolic intermediate biosynthesis; chorismate biosynthesis; chorismate from D-erythrose 4-phosphate and phosphoenolpyruvate: step 1/7. The sequence is that of Phospho-2-dehydro-3-deoxyheptonate aldolase (aro-8) from Neurospora crassa (strain ATCC 24698 / 74-OR23-1A / CBS 708.71 / DSM 1257 / FGSC 987).